Consider the following 76-residue polypeptide: Dermaseptin-H1 (76 aa).

A signal peptide spans 1-22; the sequence is MDILKKSLFIVLFLGLVSLSIC. Residues 23-45 constitute a propeptide that is removed on maturation; it reads EEEKRENEDEEEQEDDEQSEEKR. Residues 25-44 form a disordered region; the sequence is EKRENEDEEEQEDDEQSEEK. A compositionally biased stretch (acidic residues) spans 30–41; it reads EDEEEQEDDEQS. Residue Q73 is modified to Glutamine amide. Positions 75–76 are excised as a propeptide; it reads EQ.

In terms of tissue distribution, expressed by the skin glands.

Its subcellular location is the secreted. Its function is as follows. Has antimicrobial activity. This Pithecopus hypochondrialis (Orange-legged leaf frog) protein is Dermaseptin-H1.